Consider the following 293-residue polypeptide: AKT-interacting protein (293 aa).

Over residues 1–11 (MNPFWSMSTSS) the composition is skewed to polar residues. Positions 1–63 (MNPFWSMSTS…TSPAPAAQST (63 aa)) are disordered. The span at 14-23 (KRSEGEEKTL) shows a compositional bias: basic and acidic residues. At Ser-30 the chain carries Phosphoserine. Positions 74–222 (YLEYSLLAEF…VVDSVQVCTA (149 aa)) constitute a UBC core domain. Residues 253–265 (MLTQKKKPEEQHN) are compositionally biased toward basic and acidic residues. Residues 253-293 (MLTQKKKPEEQHNKSVHVAGLSWVKPGSVQPFSKEEKTVAT) are disordered.

This sequence belongs to the ubiquitin-conjugating enzyme family. FTS subfamily. As to quaternary structure, component of the FTS/Hook/FHIP complex (FHF complex), composed of AKTIP/FTS, FHIP1B, and one or more members of the Hook family of proteins HOOK1, HOOK2, and HOOK3. Interacts directly with HOOK1, HOOK2 and HOOK3. The FHF complex associates with the homotypic vesicular sorting complex (the HOPS complex). Also interacts with AKT1. May interact with FHIP1A.

It localises to the cytoplasm. The protein localises to the cell membrane. Component of the FTS/Hook/FHIP complex (FHF complex). The FHF complex may function to promote vesicle trafficking and/or fusion via the homotypic vesicular protein sorting complex (the HOPS complex). Regulates apoptosis by enhancing phosphorylation and activation of AKT1. Increases release of TNFSF6 via the AKT1/GSK3B/NFATC1 signaling cascade. FHF complex promotes the distribution of AP-4 complex to the perinuclear area of the cell. The protein is AKT-interacting protein (AKTIP) of Pongo abelii (Sumatran orangutan).